Reading from the N-terminus, the 133-residue chain is Small ribosomal subunit protein uS8 (133 aa).

The protein belongs to the universal ribosomal protein uS8 family. As to quaternary structure, part of the 30S ribosomal subunit. Contacts proteins S5 and S12.

Functionally, one of the primary rRNA binding proteins, it binds directly to 16S rRNA central domain where it helps coordinate assembly of the platform of the 30S subunit. The polypeptide is Small ribosomal subunit protein uS8 (Lachnoclostridium phytofermentans (strain ATCC 700394 / DSM 18823 / ISDg) (Clostridium phytofermentans)).